Here is a 272-residue protein sequence, read N- to C-terminus: MTIATSTKPQINWVNTLFFLGLHIGALFAFIPSNFSWAAVGVALLLYWITGGLGITLGFHRLVTHRSFQTPKWLEYFLVLCGTLACQGGPIEWVGTHRIHHLHSDTDPDPHDSNKGFWWSHIGWLIYHSPSHADVPRFTKDIAEDPVYQFLQKYFIFIQIALGLLLLYLGGWSFVVWGVFFRIVWVYHCTWLVNSATHKFGYRTYDAGDRSTNCWWVAVLVFGEGWHNNHHAFQYSARHGLEWWEVDLTWMTVQLLQILGLATNVKLADKKQ.

2 consecutive transmembrane segments (helical) span residues 11–31 (INWVNTLFFLGLHIGALFAFI) and 39–59 (AVGVALLLYWITGGLGITLGF). The short motif at 60 to 65 (HRLVTH) is the Histidine box-1 element. The Histidine box-2 motif lies at 97 to 101 (HRIHH). Residues 160–180 (IALGLLLLYLGGWSFVVWGVF) traverse the membrane as a helical segment. Positions 230–234 (HHAFQ) match the Histidine box-3 motif.

This sequence belongs to the fatty acid desaturase type 2 family. Requires Fe(2+) as cofactor.

It is found in the membrane. The enzyme catalyses a 1-octadecanoyl 2-acyl-glycerolipid + 2 reduced [2Fe-2S]-[ferredoxin] + O2 + 2 H(+) = a 1-[(9Z)-octadecenoyl]-2-acyl-glycerolipid + 2 oxidized [2Fe-2S]-[ferredoxin] + 2 H2O. It functions in the pathway lipid metabolism; polyunsaturated fatty acid biosynthesis. Its function is as follows. Desaturase involved in fatty acid biosynthesis. Introduces a double bond at carbon 9 of stearoyl groups (18:0) attached to the sn-1 position of the glycerol moiety of membrane glycerolipids. Does not desaturate palmitic acid (16:0), palmitoleic acid (16:1) and cis-vaccenic acid (18:1). The protein is sn-1 stearoyl-lipid 9-desaturase of Anabaena variabilis.